The sequence spans 228 residues: Probable GTP-binding protein EngB (228 aa).

An EngB-type G domain is found at 48-222; that stretch reads YGLEVAFVGY…QFVLNNWFSS (175 aa). Residues 56-63, 83-87, 101-104, 168-171, and 201-203 each bind GTP; these read GYSNSGKS, GRTRL, DFPG, NKMD, and FSS. Residues Ser-63 and Thr-85 each coordinate Mg(2+).

Belongs to the TRAFAC class TrmE-Era-EngA-EngB-Septin-like GTPase superfamily. EngB GTPase family. Mg(2+) is required as a cofactor.

Its function is as follows. Necessary for normal cell division and for the maintenance of normal septation. This chain is Probable GTP-binding protein EngB, found in Buchnera aphidicola subsp. Baizongia pistaciae (strain Bp).